The following is a 454-amino-acid chain: Maintenance of mitochondrial morphology protein 1 (454 aa).

Topologically, residues 1–128 (MSMVIGIGDL…QSSGWGFAHG (128 aa)) are lumenal. The helical transmembrane segment at 129 to 149 (LLVGQLSVVAVLAFFIKFFIF) threads the bilayer. The Cytoplasmic segment spans residues 150–454 (GNSSMARPLM…SESETAVDSN (305 aa)). The SMP-LTD domain maps to 207–430 (QSESLDWFNV…EPRFQLIELP (224 aa)).

It belongs to the MMM1 family. In terms of assembly, homodimer. Component of the ER-mitochondria encounter structure (ERMES) or MDM complex, composed of MMM1, MDM10, MDM12 and MDM34. An MMM1 homodimer associates with one molecule of MDM12 on each side in a pairwise head-to-tail manner, and the SMP-LTD domains of MMM1 and MDM12 generate a continuous hydrophobic tunnel for phospholipid trafficking.

The protein resides in the endoplasmic reticulum membrane. Its function is as follows. Component of the ERMES/MDM complex, which serves as a molecular tether to connect the endoplasmic reticulum (ER) and mitochondria. Components of this complex are involved in the control of mitochondrial shape and protein biogenesis, and function in nonvesicular lipid trafficking between the ER and mitochondria. The MDM12-MMM1 subcomplex functions in the major beta-barrel assembly pathway that is responsible for biogenesis of all outer membrane beta-barrel proteins, and acts in a late step after the SAM complex. The MDM10-MDM12-MMM1 subcomplex further acts in the TOM40-specific pathway after the action of the MDM12-MMM1 complex. Essential for establishing and maintaining the structure of mitochondria and maintenance of mtDNA nucleoids. The protein is Maintenance of mitochondrial morphology protein 1 of Komagataella phaffii (strain GS115 / ATCC 20864) (Yeast).